Here is a 39-residue protein sequence, read N- to C-terminus: Photosystem I reaction center subunit IX (39 aa).

Residues 7–27 (FLTTAPVAFILFSSFVFALFI) form a helical membrane-spanning segment.

This sequence belongs to the PsaJ family.

The protein localises to the cellular thylakoid membrane. Its function is as follows. May help in the organization of the PsaE and PsaF subunits. In Synechococcus sp. (strain JA-3-3Ab) (Cyanobacteria bacterium Yellowstone A-Prime), this protein is Photosystem I reaction center subunit IX.